A 365-amino-acid polypeptide reads, in one-letter code: Phospho-N-acetylmuramoyl-pentapeptide-transferase (365 aa).

Transmembrane regions (helical) follow at residues 22-42 (YISV…LALG), 74-94 (TMGG…WGDL), 95-115 (TSIY…IGFF), 134-154 (KFAL…YLLS), 168-188 (SLYI…IING), 201-221 (GLAI…AYIE), 240-260 (LAEV…FLWF), 267-287 (VFMG…IAVM), 292-312 (LIFF…MLQV), and 342-362 (KVVI…LAAI).

This sequence belongs to the glycosyltransferase 4 family. MraY subfamily. It depends on Mg(2+) as a cofactor.

Its subcellular location is the cell inner membrane. It carries out the reaction UDP-N-acetyl-alpha-D-muramoyl-L-alanyl-gamma-D-glutamyl-meso-2,6-diaminopimeloyl-D-alanyl-D-alanine + di-trans,octa-cis-undecaprenyl phosphate = di-trans,octa-cis-undecaprenyl diphospho-N-acetyl-alpha-D-muramoyl-L-alanyl-D-glutamyl-meso-2,6-diaminopimeloyl-D-alanyl-D-alanine + UMP. It participates in cell wall biogenesis; peptidoglycan biosynthesis. Catalyzes the initial step of the lipid cycle reactions in the biosynthesis of the cell wall peptidoglycan: transfers peptidoglycan precursor phospho-MurNAc-pentapeptide from UDP-MurNAc-pentapeptide onto the lipid carrier undecaprenyl phosphate, yielding undecaprenyl-pyrophosphoryl-MurNAc-pentapeptide, known as lipid I. The chain is Phospho-N-acetylmuramoyl-pentapeptide-transferase from Francisella tularensis subsp. novicida (strain U112).